The following is a 416-amino-acid chain: MSEQDEVPSEDRRKYEFRKVIEELKDYEGSGTQLVTIYIPPDKQISDVVAHVTQEHSEASNIKSKQTRTNVQDALTSIKDRLRYYDTFPPDNGMVVFSGAVDSGGGRTDMVTEVLESPPQPIESFRYHCDSAFLTEPLAEMLGDKGLYGLIVLDRRESNVGWLKGKRVQPVKSAESLVPGKQRKGGQSAQRFARLRLEAIDNFYQEVAGMADDLFVPKRHEIDGILVGGPSPTKDEFLDGDYLHHELQDKVLGKFDVSYTDESGLSDLVDAGQAALAEADLMDDKSDMEEFFEELNGGKLATYGFEQTRRNLIMGSVDRLLVSEDLREDVVIYECPNDHEEYETIDRRNTSPEHTCSDCGEEATEVDREDAIDHLMSIADQRGTETHFISTDFEKGEQLLTAFGGYAGILRYSTGV.

Belongs to the eukaryotic release factor 1 family. In terms of assembly, heterodimer of two subunits, one of which binds GTP.

Its subcellular location is the cytoplasm. In terms of biological role, directs the termination of nascent peptide synthesis (translation) in response to the termination codons UAA, UAG and UGA. The protein is Peptide chain release factor subunit 1 of Halobacterium salinarum (strain ATCC 29341 / DSM 671 / R1).